A 149-amino-acid polypeptide reads, in one-letter code: Transcriptional repressor NrdR (149 aa).

Residues 3–34 fold into a zinc finger; that stretch reads CPFCSATDTKVIDSRLVAEGHQVRRRRECTEC. The ATP-cone domain maps to 49 to 139; the sequence is PRVIKRDGSR…VYRAFEDVSE (91 aa).

Belongs to the NrdR family. Requires Zn(2+) as cofactor.

Functionally, negatively regulates transcription of bacterial ribonucleotide reductase nrd genes and operons by binding to NrdR-boxes. This Shewanella baltica (strain OS223) protein is Transcriptional repressor NrdR.